Here is an 82-residue protein sequence, read N- to C-terminus: Exodeoxyribonuclease 7 small subunit (82 aa).

The protein belongs to the XseB family. In terms of assembly, heterooligomer composed of large and small subunits.

It localises to the cytoplasm. The catalysed reaction is Exonucleolytic cleavage in either 5'- to 3'- or 3'- to 5'-direction to yield nucleoside 5'-phosphates.. Bidirectionally degrades single-stranded DNA into large acid-insoluble oligonucleotides, which are then degraded further into small acid-soluble oligonucleotides. The sequence is that of Exodeoxyribonuclease 7 small subunit from Pectobacterium atrosepticum (strain SCRI 1043 / ATCC BAA-672) (Erwinia carotovora subsp. atroseptica).